Here is a 426-residue protein sequence, read N- to C-terminus: Serine hydroxymethyltransferase (426 aa).

(6S)-5,6,7,8-tetrahydrofolate contacts are provided by residues Leu122 and 126–128 (GHL). Lys231 carries the N6-(pyridoxal phosphate)lysine modification.

The protein belongs to the SHMT family. Homodimer. Requires pyridoxal 5'-phosphate as cofactor.

The protein resides in the cytoplasm. It catalyses the reaction (6R)-5,10-methylene-5,6,7,8-tetrahydrofolate + glycine + H2O = (6S)-5,6,7,8-tetrahydrofolate + L-serine. The protein operates within one-carbon metabolism; tetrahydrofolate interconversion. Its pathway is amino-acid biosynthesis; glycine biosynthesis; glycine from L-serine: step 1/1. Its function is as follows. Catalyzes the reversible interconversion of serine and glycine with tetrahydrofolate (THF) serving as the one-carbon carrier. This reaction serves as the major source of one-carbon groups required for the biosynthesis of purines, thymidylate, methionine, and other important biomolecules. Also exhibits THF-independent aldolase activity toward beta-hydroxyamino acids, producing glycine and aldehydes, via a retro-aldol mechanism. In Koribacter versatilis (strain Ellin345), this protein is Serine hydroxymethyltransferase.